Reading from the N-terminus, the 336-residue chain is MAEDQNTTDRWELPSASEPVKNVDRWELPSASEPVKNVVLVGRTGNGKSATGNSIIGRKVFESKYQAVGVTTRCKTFRAVTPDGPIINVIDTPGLFDLAVSAEFISKEIVNCLILAREGLHAVVLVLSLSTRISQEEENALCTLQMLFGGKIVDYLIVVFTCGDMLEDRNMTLEDYLSNGCPEFLKNVLRLCGGRRVVFDNRTKDEGVKAKQVQQLLVHVAAIEKETGGNPFTDTMHRRIQEEAARVKREEKEIEEKNIADEEKAALKKQLDMSYSQNMNMMALMMERIFKETAAANERQMNMMKDFMEISIIGNDAHRKRAEEKQAEKKQECNIL.

In terms of domain architecture, AIG1-type G spans 33 to 241 (EPVKNVVLVG…FTDTMHRRIQ (209 aa)). The tract at residues 42 to 49 (GRTGNGKS) is G1. Residues 42–50 (GRTGNGKSA) and Ser63 contribute to the GTP site. Positions 69 to 73 (GVTTR) are G2. A G3 region spans residues 91–94 (DTPG). Positions 161–164 (TCGD) are G4. The G5 stretch occupies residues 200 to 202 (DNR). Asn201 is a GTP binding site. A coiled-coil region spans residues 237–270 (HRRIQEEAARVKREEKEIEEKNIADEEKAALKKQ).

It belongs to the TRAFAC class TrmE-Era-EngA-EngB-Septin-like GTPase superfamily. AIG1/Toc34/Toc159-like paraseptin GTPase family. IAN subfamily. In terms of tissue distribution, mostly expressed in pollen. Also detected in lateral roots and radicles.

The sequence is that of Immune-associated nucleotide-binding protein 6 from Arabidopsis thaliana (Mouse-ear cress).